A 661-amino-acid polypeptide reads, in one-letter code: DNA cross-link repair protein PSO2/SNM1 (661 aa).

The tract at residues 1 to 44 is disordered; that stretch reads MSRKSIVQIRRSEVKRKRSSTASSTSEGKTLHKNTHTSSKRQRT. The segment covering 31–43 has biased composition (basic residues); it reads LHKNTHTSSKRQR. Residues 144–174 form a UBZ4-type zinc finger; the sequence is VIQCPICLENLSHLELYERETHCDTCIGSDP. Residues C147, C150, H165, and C169 each contribute to the Zn(2+) site.

The protein belongs to the DNA repair metallo-beta-lactamase (DRMBL) family.

It localises to the nucleus. In terms of biological role, required for DNA interstrand cross-link repair. This requires cleavage of cross-linked DNA to generate DNA double strand breaks (DSBs). This protein has 5' exonuclease activity on single-stranded and double-stranded DNA, which appears to be necessary for the processing of DNA double strand breaks prior to ligation. In Saccharomyces cerevisiae (strain ATCC 204508 / S288c) (Baker's yeast), this protein is DNA cross-link repair protein PSO2/SNM1 (PSO2).